Here is a 438-residue protein sequence, read N- to C-terminus: Glyceraldehyde-3-phosphate dehydrogenase B, chloroplastic (438 aa).

A chloroplast-targeting transit peptide spans 1–53; sequence CLSKKFEVAEFAGLRSSGCVTFSNKESSFFDVVSAQLTPKTTRSTPVKGETVA. NADP(+) contacts are provided by residues 64 to 65, Asp-88, and Arg-133; that span reads RI. Residues 207 to 209, Thr-238, Arg-253, 266 to 267, and Arg-289 each bind D-glyceraldehyde 3-phosphate; these read SCT and TG. The active-site Nucleophile is Cys-208. Asn-372 is an NADP(+) binding site.

Belongs to the glyceraldehyde-3-phosphate dehydrogenase family. Tetramer of either four A chains (GAPDH 2) or two A and two B chains (GAPDH 1).

The protein resides in the plastid. Its subcellular location is the chloroplast. It catalyses the reaction D-glyceraldehyde 3-phosphate + phosphate + NADP(+) = (2R)-3-phospho-glyceroyl phosphate + NADPH + H(+). The protein operates within carbohydrate biosynthesis; Calvin cycle. The polypeptide is Glyceraldehyde-3-phosphate dehydrogenase B, chloroplastic (GAPB) (Nicotiana tabacum (Common tobacco)).